Reading from the N-terminus, the 104-residue chain is MGSRCAKLSTGHGPAQNTGHSRGHESSMKKLVACVSQDNFSLSSEGEEEEEDEEDEEEEDDDEEDEEEEQIPVKGKLLLLEPEKQDGAEDAVAQPSPEPKQKHS.

The interval 1–104 (MGSRCAKLST…PSPEPKQKHS (104 aa)) is disordered. Positions 45–70 (EGEEEEEDEEDEEEEDDDEEDEEEEQ) are enriched in acidic residues. Ser-96 bears the Phosphoserine mark.

This sequence belongs to the protamine P3 family. In terms of tissue distribution, testis.

It is found in the nucleus. The protein localises to the chromosome. In terms of biological role, protamines substitute for histones in the chromatin of sperm during the haploid phase of spermatogenesis. They compact sperm DNA into a highly condensed, stable and inactive complex. The chain is Protamine-3 (Prm3) from Rattus norvegicus (Rat).